Reading from the N-terminus, the 500-residue chain is Galactose/methyl galactoside import ATP-binding protein MglA (500 aa).

2 ABC transporter domains span residues 8–243 (LEME…VGRD) and 257–500 (EMIL…AKYL). Residue 40–47 (GENGAGKS) coordinates ATP.

Belongs to the ABC transporter superfamily. Galactose/methyl galactoside importer (TC 3.A.1.2.3) family. As to quaternary structure, the complex is composed of one ATP-binding protein (MglA), two transmembrane proteins (MglC) and a solute-binding protein (MglB).

The protein resides in the cell inner membrane. It catalyses the reaction D-galactose(out) + ATP + H2O = D-galactose(in) + ADP + phosphate + H(+). The enzyme catalyses methyl beta-D-galactoside(out) + ATP + H2O = methyl beta-D-galactoside(in) + ADP + phosphate + H(+). In terms of biological role, part of the ABC transporter complex MglABC involved in galactose/methyl galactoside import. Responsible for energy coupling to the transport system. In Fusobacterium nucleatum subsp. nucleatum (strain ATCC 25586 / DSM 15643 / BCRC 10681 / CIP 101130 / JCM 8532 / KCTC 2640 / LMG 13131 / VPI 4355), this protein is Galactose/methyl galactoside import ATP-binding protein MglA.